A 696-amino-acid chain; its full sequence is Polyribonucleotide nucleotidyltransferase (696 aa).

Positions 486 and 492 each coordinate Mg(2+). Residues 553-612 form the KH domain; the sequence is PRIIVRNIPKDRIGELIGPGGKNVRGISELTGAELYIEDDGRVTISGSNQESAEKAAKMV. Residues 622–690 form the S1 motif domain; the sequence is GKIYEGKVKR…KTGKIDLSRK (69 aa).

Belongs to the polyribonucleotide nucleotidyltransferase family. Requires Mg(2+) as cofactor.

It localises to the cytoplasm. The catalysed reaction is RNA(n+1) + phosphate = RNA(n) + a ribonucleoside 5'-diphosphate. Its function is as follows. Involved in mRNA degradation. Catalyzes the phosphorolysis of single-stranded polyribonucleotides processively in the 3'- to 5'-direction. This chain is Polyribonucleotide nucleotidyltransferase, found in Leptospira borgpetersenii serovar Hardjo-bovis (strain L550).